A 505-amino-acid polypeptide reads, in one-letter code: RNA-splicing ligase RtcB homolog (505 aa).

Asp-119, Cys-122, His-227, and His-259 together coordinate Mn(2+). 226 to 230 (NHYAE) provides a ligand contact to GMP. Ser-300 carries the post-translational modification Phosphoserine. His-353 serves as a coordination point for Mn(2+). GMP is bound by residues 353-354 (HN), 402-405 (GGTM), Ser-409, and 428-431 (HGAG). The active-site GMP-histidine intermediate is the His-428. Residue Lys-496 forms a Glycyl lysine isopeptide (Lys-Gly) (interchain with G-Cter in SUMO2) linkage. Lys-504 contributes to the GMP binding site.

Belongs to the RtcB family. As to quaternary structure, catalytic component of the tRNA-splicing ligase complex. Mn(2+) serves as cofactor.

It is found in the nucleus. The protein localises to the cytoplasm. It catalyses the reaction a 3'-end 3'-phospho-ribonucleotide-RNA + a 5'-end dephospho-ribonucleoside-RNA + GTP = a ribonucleotidyl-ribonucleotide-RNA + GMP + diphosphate. It carries out the reaction a 3'-end 2',3'-cyclophospho-ribonucleotide-RNA + a 5'-end dephospho-ribonucleoside-RNA + GTP + H2O = a ribonucleotidyl-ribonucleotide-RNA + GMP + diphosphate + H(+). With respect to regulation, protein archease stimulates the activity of the tRNA ligase complex with high efficiency in the presence of GTP. Its function is as follows. Catalytic subunit of the tRNA-splicing ligase complex that acts by directly joining spliced tRNA halves to mature-sized tRNAs by incorporating the precursor-derived splice junction phosphate into the mature tRNA as a canonical 3',5'-phosphodiester. May act as an RNA ligase with broad substrate specificity, and may function toward other RNAs. The protein is RNA-splicing ligase RtcB homolog of Homo sapiens (Human).